The primary structure comprises 314 residues: MMGQNQTSISDFLLLGLPIQPEQQNLCYALFLAMYLTTLLGNLLIIVLIRLDSHLHTPMYLFLSNLSFSDLCFSSVTIPKLLQNMQNQDPSIPYADCLTQMYFFLLFGDLESFLLVAMAYDRYVAICFALHYTAIMSPMLCLSLVALSWVLTTFHAMLHTLLMARLCFCADNVIPHFFCDMSALLKLACSDTRVNEWVIFIMGGLIVVIPFLLILGSYARIVSSILKVPSSKGICKAFSTCGSHLSVVSLFYGTVIGLYLCPSANSSTLKETVMAMMYTVVTPMLNPFIYSLRNGDMKGALSRVIHQKKTFFSL.

Residues 1–25 (MMGQNQTSISDFLLLGLPIQPEQQN) are Extracellular-facing. Asparagine 5 is a glycosylation site (N-linked (GlcNAc...) asparagine). Residues 26-49 (LCYALFLAMYLTTLLGNLLIIVLI) form a helical membrane-spanning segment. Residues 50–57 (RLDSHLHT) lie on the Cytoplasmic side of the membrane. Residues 58 to 79 (PMYLFLSNLSFSDLCFSSVTIP) form a helical membrane-spanning segment. Residues 80–100 (KLLQNMQNQDPSIPYADCLTQ) are Extracellular-facing. Cysteine 97 and cysteine 189 are joined by a disulfide. Residues 101–120 (MYFFLLFGDLESFLLVAMAY) traverse the membrane as a helical segment. The Cytoplasmic segment spans residues 121-139 (DRYVAICFALHYTAIMSPM). The chain crosses the membrane as a helical span at residues 140–158 (LCLSLVALSWVLTTFHAML). The Extracellular segment spans residues 159–195 (HTLLMARLCFCADNVIPHFFCDMSALLKLACSDTRVN). A helical membrane pass occupies residues 196-219 (EWVIFIMGGLIVVIPFLLILGSYA). The Cytoplasmic portion of the chain corresponds to 220-236 (RIVSSILKVPSSKGICK). A helical transmembrane segment spans residues 237–259 (AFSTCGSHLSVVSLFYGTVIGLY). Residues 260-272 (LCPSANSSTLKET) lie on the Extracellular side of the membrane. A helical transmembrane segment spans residues 273-292 (VMAMMYTVVTPMLNPFIYSL). Topologically, residues 293 to 314 (RNGDMKGALSRVIHQKKTFFSL) are cytoplasmic.

Belongs to the G-protein coupled receptor 1 family.

The protein localises to the cell membrane. Its function is as follows. Odorant receptor. In Gorilla gorilla gorilla (Western lowland gorilla), this protein is Olfactory receptor 1E1 (OR1E1).